A 232-amino-acid chain; its full sequence is uncharacterized protein (232 aa).

The disordered stretch occupies residues 1-71; it reads MSNPTIEGDE…KENERIKNDD (71 aa). Residues 25 to 38 show a composition bias toward acidic residues; sequence DDLDDLDDILDDLD. The segment covering 44 to 71 has biased composition (basic and acidic residues); sequence KNEEKKNIDEHKQTGNTSKENERIKNDD.

This is an uncharacterized protein from Schizosaccharomyces pombe (strain 972 / ATCC 24843) (Fission yeast).